We begin with the raw amino-acid sequence, 205 residues long: 7-methyl-GTP pyrophosphatase (205 aa).

Residue Asp79 is the Proton acceptor of the active site.

Belongs to the Maf family. YceF subfamily. It depends on a divalent metal cation as a cofactor.

It localises to the cytoplasm. It catalyses the reaction N(7)-methyl-GTP + H2O = N(7)-methyl-GMP + diphosphate + H(+). Its function is as follows. Nucleoside triphosphate pyrophosphatase that hydrolyzes 7-methyl-GTP (m(7)GTP). May have a dual role in cell division arrest and in preventing the incorporation of modified nucleotides into cellular nucleic acids. The protein is 7-methyl-GTP pyrophosphatase of Paraburkholderia xenovorans (strain LB400).